A 167-amino-acid polypeptide reads, in one-letter code: CKLF-like MARVEL transmembrane domain-containing protein 7 (167 aa).

The MARVEL domain occupies 32–158; that stretch reads YPLTHGALFK…SLWLSYKITC (127 aa). Transmembrane regions (helical) follow at residues 35–55, 69–89, 102–122, and 132–152; these read THGA…FICV, FEVV…VHLF, LSEL…SIVI, and LVAG…SLWL.

The protein belongs to the chemokine-like factor family.

The protein localises to the membrane. The polypeptide is CKLF-like MARVEL transmembrane domain-containing protein 7 (Cmtm7) (Mus musculus (Mouse)).